A 332-amino-acid polypeptide reads, in one-letter code: L-lactate dehydrogenase A chain (332 aa).

An N-acetylalanine modification is found at Ala2. Lys5 is modified (N6-acetyllysine; alternate). Lys5 is modified (N6-succinyllysine; alternate). Lys14 is subject to N6-acetyllysine. Thr18 carries the phosphothreonine modification. 29–57 (GAVGMACAISILMKDLADELALVDVIEDK) serves as a coordination point for NAD(+). Lys57 carries the post-translational modification N6-acetyllysine; alternate. Lys57 is covalently cross-linked (Glycyl lysine isopeptide (Lys-Gly) (interchain with G-Cter in SUMO2); alternate). Lys81 bears the N6-acetyllysine mark. Residue Arg99 coordinates NAD(+). Arg106 provides a ligand contact to substrate. Lys118 carries the post-translational modification N6-acetyllysine; alternate. Lys118 is subject to N6-succinyllysine; alternate. Lys126 carries the N6-acetyllysine modification. Substrate is bound by residues Asn138 and Arg169. His193 serves as the catalytic Proton acceptor. Residues Lys224 and Lys232 each carry the N6-acetyllysine modification. Tyr239 carries the post-translational modification Phosphotyrosine. Lys243 carries the N6-acetyllysine modification. Thr248 lines the substrate pocket. Thr309 is modified (phosphothreonine). Residue Ser310 is modified to Phosphoserine. An N6-acetyllysine; alternate modification is found at Lys318. Residue Lys318 is modified to N6-succinyllysine; alternate. Thr322 bears the Phosphothreonine mark.

The protein belongs to the LDH/MDH superfamily. LDH family. As to quaternary structure, homotetramer. Interacts with PTEN upstream reading frame protein MP31. In terms of processing, ISGylated.

Its subcellular location is the cytoplasm. It carries out the reaction (S)-lactate + NAD(+) = pyruvate + NADH + H(+). Its pathway is fermentation; pyruvate fermentation to lactate; (S)-lactate from pyruvate: step 1/1. Functionally, interconverts simultaneously and stereospecifically pyruvate and lactate with concomitant interconversion of NADH and NAD(+). This is L-lactate dehydrogenase A chain (LDHA) from Pan troglodytes (Chimpanzee).